The following is a 119-amino-acid chain: Large ribosomal subunit protein uL18 (119 aa).

Residues 1 to 25 (MITKIDKNKVRKKRHARVRSKISGT) are disordered. Residues 9 to 20 (KVRKKRHARVRS) are compositionally biased toward basic residues.

It belongs to the universal ribosomal protein uL18 family. In terms of assembly, part of the 50S ribosomal subunit; part of the 5S rRNA/L5/L18/L25 subcomplex. Contacts the 5S and 23S rRNAs.

Its function is as follows. This is one of the proteins that bind and probably mediate the attachment of the 5S RNA into the large ribosomal subunit, where it forms part of the central protuberance. The chain is Large ribosomal subunit protein uL18 from Listeria innocua serovar 6a (strain ATCC BAA-680 / CLIP 11262).